The chain runs to 266 residues: MLSIPLVCSSDFAPAAQVLAQEFNLPIRVGEVPETIGDCEFVLVLDETGLALQQTGRKAPGAVRAEFTEGAVDHRRKFGGGKGQMIAKAVGVKAGFSPRVLDATAGLGRDAFVLATLGCRLQMIERSPLVFALLRDGLARAHAFAHAQDRELLQVVERMELAAQDSKTYLQGLAPEQFPDVIYLDPMFPERQKSADVKKEMRAFHSIVGTDEDADVLLPLALEHVRFRVVVKRPRKAPFLNNQIPSYQLEGKSSRYDIYTRKKLPD.

Residues 109–110 (RD), 125–126 (ER), and D185 each bind S-adenosyl-L-methionine.

It belongs to the methyltransferase superfamily. RsmJ family.

The protein localises to the cytoplasm. It carries out the reaction guanosine(1516) in 16S rRNA + S-adenosyl-L-methionine = N(2)-methylguanosine(1516) in 16S rRNA + S-adenosyl-L-homocysteine + H(+). Its function is as follows. Specifically methylates the guanosine in position 1516 of 16S rRNA. In Cellvibrio japonicus (strain Ueda107) (Pseudomonas fluorescens subsp. cellulosa), this protein is Ribosomal RNA small subunit methyltransferase J.